Consider the following 330-residue polypeptide: Olfactory receptor 1P1 (330 aa).

Residues 1 to 39 are Extracellular-facing; the sequence is MGLTQDFFPPTSELLEGGNQTSTFEFLLWGLSDQPQQQH. N-linked (GlcNAc...) asparagine glycosylation occurs at asparagine 19. A helical membrane pass occupies residues 40-60; that stretch reads IFFLLFLWMYVVTVAGNLLIV. Over 61–71 the chain is Cytoplasmic; it reads LAIGTDTHLHT. A helical membrane pass occupies residues 72–92; the sequence is PMYFFLASLSCADIFSTSTTV. Over 93–111 the chain is Extracellular; sequence PKALVNIQTQSRSISYAGC. Cysteines 111 and 192 form a disulfide. Residues 112–132 traverse the membrane as a helical segment; it reads LAQLYFFLTFGDMDIFLPATM. The Cytoplasmic segment spans residues 133-137; sequence AYDRY. The chain crosses the membrane as a helical span at residues 138–158; the sequence is VAICHLLHYMMIMSLHRCAFL. The Extracellular portion of the chain corresponds to 159 to 209; the sequence is VTACWTLTSLLAMTRTFLIFRLSLCSKILPGFFCDLGPLMKVSCSDAQVNE. The chain crosses the membrane as a helical span at residues 210 to 230; that stretch reads LVLLFLGGAVILIPFMLILVS. Residues 231-257 lie on the Cytoplasmic side of the membrane; it reads YIRIVSAILRAPSAQGRRKAFSTCDSH. Residues 258-278 traverse the membrane as a helical segment; it reads LVVVALFFGTVIRAYLCPSSS. Over 279–286 the chain is Extracellular; it reads SSNSVKED. The chain crosses the membrane as a helical span at residues 287 to 307; it reads TAAAVMYTVVTPLLNPFIYSM. The Cytoplasmic segment spans residues 308–330; that stretch reads RNKDMKAAVVRLLKGRVSFSQGQ.

The protein belongs to the G-protein coupled receptor 1 family.

It is found in the cell membrane. Its function is as follows. Odorant receptor. The sequence is that of Olfactory receptor 1P1 (OR1P1) from Homo sapiens (Human).